Reading from the N-terminus, the 521-residue chain is Bifunctional dihydrofolate reductase-thymidylate synthase (521 aa).

In terms of domain architecture, DHFR spans 17–194 (NYQVVVAGTR…IRHSFVSFVR (178 aa)). Valine 21 is a binding site for substrate. NADP(+)-binding positions include alanine 23 and 29 to 35 (GIGKDGV). Aspartate 43 is a binding site for substrate. Residues 67 to 69 (RKT) and 88 to 91 (LTRS) contribute to the NADP(+) site. Isoleucine 130 is a substrate binding site. 131–138 (GGGQVLRE) contributes to the NADP(+) binding site. Threonine 151 contacts substrate. The tract at residues 197-521 (KSVAETHESN…HQKIEMKMAV (325 aa)) is thymidylate synthase. Arginine 258 contributes to the dUMP binding site. Cysteine 403 is an active-site residue. DUMP contacts are provided by residues histidine 404, 422–426 (QRSAD), asparagine 434, and 464–466 (HVY).

In the N-terminal section; belongs to the dihydrofolate reductase family. The protein in the C-terminal section; belongs to the thymidylate synthase family.

It carries out the reaction (6S)-5,6,7,8-tetrahydrofolate + NADP(+) = 7,8-dihydrofolate + NADPH + H(+). The catalysed reaction is dUMP + (6R)-5,10-methylene-5,6,7,8-tetrahydrofolate = 7,8-dihydrofolate + dTMP. It participates in cofactor biosynthesis; tetrahydrofolate biosynthesis; 5,6,7,8-tetrahydrofolate from 7,8-dihydrofolate: step 1/1. In terms of biological role, bifunctional enzyme. Involved in de novo dTMP biosynthesis. Key enzyme in folate metabolism. Can play two different roles depending on the source of dihydrofolate: de novo synthesis of tetrahydrofolate or recycling of the dihydrofolate released as one of the end products of the TS catalyzed reaction. Catalyzes an essential reaction for de novo glycine and purine synthesis, DNA precursor synthesis, and for the conversion of dUMP to dTMP. The chain is Bifunctional dihydrofolate reductase-thymidylate synthase (DRTS) from Zea mays (Maize).